A 246-amino-acid chain; its full sequence is MIMASSKLLSLALFLALLSHANSATETSFIIDAFNKTNLILQGDATVSSNGNLQLSYNSYDSMSRAFYSAPIQIRDSTTGNVASFDTNFTMNIRTHRQANSAVGLDFVLVPVQPESKGDTVTVEFDTFLSRISIDVNNNDIKSVPWDVHDYDGQNAEVRITYNSSTKVFSVSLSNPSTGKSNNVSTTVELEKEVYDWVSVGFSATSGAYQWSYETHDVLSWSFSSKFINLKDQKSERSNIVLNKIL.

The signal sequence occupies residues 1–23; that stretch reads MIMASSKLLSLALFLALLSHANS. 3 N-linked (GlcNAc...) asparagine glycosylation sites follow: asparagine 35, asparagine 88, and asparagine 163. A propeptide spanning residues 240-246 is cleaved from the precursor; it reads IVLNKIL.

This sequence belongs to the leguminous lectin family. In terms of assembly, heterodimer of chain 1 and chain 2. Post-translationally, proteolytic processing yields active form.

Lectin and alpha-amylase inhibitor. Acts as a defensive protein against insects. This chain is Alpha-amylase inhibitor 1 (LLP), found in Phaseolus vulgaris (Kidney bean).